Here is a 343-residue protein sequence, read N- to C-terminus: 2,3,4,5-tetrahydropyridine-2,6-dicarboxylate N-succinyltransferase (343 aa).

Residue Glu-204 coordinates Mg(2+). The active-site Acyl-anhydride intermediate is Glu-220. Succinyl-CoA contacts are provided by residues Arg-222, Gly-237, Ser-240, Ala-263, 278–279, Gly-286, Lys-303, and 316–319; these read ES and RRNS.

This sequence belongs to the type 2 tetrahydrodipicolinate N-succinyltransferase family. In terms of assembly, homotrimer.

It is found in the cytoplasm. The enzyme catalyses (S)-2,3,4,5-tetrahydrodipicolinate + succinyl-CoA + H2O = (S)-2-succinylamino-6-oxoheptanedioate + CoA. It participates in amino-acid biosynthesis; L-lysine biosynthesis via DAP pathway; LL-2,6-diaminopimelate from (S)-tetrahydrodipicolinate (succinylase route): step 1/3. Catalyzes the conversion of the cyclic tetrahydrodipicolinate (THDP) into the acyclic N-succinyl-L-2-amino-6-oxopimelate using succinyl-CoA. This is 2,3,4,5-tetrahydropyridine-2,6-dicarboxylate N-succinyltransferase from Vibrio cholerae serotype O1 (strain ATCC 39315 / El Tor Inaba N16961).